Reading from the N-terminus, the 387-residue chain is MNTSDLKQEFTEAFDTKPERVFFSPGRINLIGEHTDYNGGHVFPCAITIGTYGVYAPRTDTTVRMYSANIPDAGIVTFDVNDLSYDKAAGWTNYPKGMMDEIAKTGVKFDHGFDFYVHGNMPDGAGLSSSASIELLTGIMLNTGFNLGISQLDLVKIGQKCENNYVGVNSGIMDQFAVGMGKKDQAILLDTNTMDYSYAPVKLGNNVIVIMNTNKRRELADSKYNERRSECEEALRRLQTKLDIKSLGDLTNDQFDEAAYLINDETLIKRARHAVFENQRAIRATKALADDDLTTFGELVTASHVSLHFDYEVTGKELDTLAETAWKQPGVLGARMTGAGFGGCGIAIVDKDQVDAFKENVGKVYRDTIGYDADFYIAEIADGPKEL.

Position 33–36 (33–36) interacts with substrate; sequence EHTD. Residues S67 and 124-130 each bind ATP; that span reads GAGLSSS. Positions 130 and 162 each coordinate Mg(2+). D174 serves as the catalytic Proton acceptor. Y224 lines the substrate pocket.

It belongs to the GHMP kinase family. GalK subfamily.

The protein localises to the cytoplasm. The enzyme catalyses alpha-D-galactose + ATP = alpha-D-galactose 1-phosphate + ADP + H(+). The protein operates within carbohydrate metabolism; galactose metabolism. In terms of biological role, catalyzes the transfer of the gamma-phosphate of ATP to D-galactose to form alpha-D-galactose-1-phosphate (Gal-1-P). This is Galactokinase from Lactiplantibacillus plantarum (strain ATCC BAA-793 / NCIMB 8826 / WCFS1) (Lactobacillus plantarum).